The primary structure comprises 502 residues: MADKADKMKARLPRGFVDRVPDDLRAAEKMMATIREVYDLYGFEPVETPLVEYTDALGKFLPDQDRPNEGVFSFQDDDEQWLSLRYDLTAPLARYVAENFETLPKPYRSYRNGWVFRNEKPGPGRFRQFMQFDADTVGAPNVSADAEMCMMMADTLERLGIQRGDYAIRVNNRKVLDGVLDAIGLEGEGNAAKRLNVLRAIDKLDKFGPEGVRLLLGKGRLDESGDFTKGAQLPEAAIEKVLAFTAAGGADGAQTIANLQAVVAGNAEGEEGVQELADMQALFFAGGYEGRVKIDPSVVRGLEYYTGPVFEAELLFDVTNEDGQKVVFGSVGGGGRYDGLVSRFRGEPVPATGFSIGVSRLMTALKNLGKLDVSDTVGPVVVLVMDKDTQNLGRYQKMVSDLRKAGIRAEMYVGGSGMKAQMKYADRRAAPCVVIQGSQEREAGEVQIKDLVEGKRLSAEIEDNVTWRESRPAQITVREDGLVDAVREILDAQARDRAEQSK.

It belongs to the class-II aminoacyl-tRNA synthetase family. In terms of assembly, homodimer.

It localises to the cytoplasm. The enzyme catalyses tRNA(His) + L-histidine + ATP = L-histidyl-tRNA(His) + AMP + diphosphate + H(+). The chain is Histidine--tRNA ligase (hisS) from Brucella suis biovar 1 (strain 1330).